The sequence spans 518 residues: Probable malate:quinone oxidoreductase (518 aa).

Residues Gly-495–Val-518 are disordered. Residues Thr-501–Val-518 are compositionally biased toward polar residues.

It belongs to the MQO family. It depends on FAD as a cofactor.

It catalyses the reaction (S)-malate + a quinone = a quinol + oxaloacetate. The protein operates within carbohydrate metabolism; tricarboxylic acid cycle; oxaloacetate from (S)-malate (quinone route): step 1/1. The sequence is that of Probable malate:quinone oxidoreductase from Mycolicibacterium gilvum (strain PYR-GCK) (Mycobacterium gilvum (strain PYR-GCK)).